A 154-amino-acid chain; its full sequence is Methylglyoxal synthase (154 aa).

Positions 6–154 constitute an MGS-like domain; the sequence is GALPSRKQIA…AYIAERTKKL (149 aa). Substrate-binding positions include histidine 19, lysine 23, 45–48, and 65–66; these read TGTT and SG. The active-site Proton donor/acceptor is aspartate 71. Histidine 98 is a binding site for substrate.

The protein belongs to the methylglyoxal synthase family.

It carries out the reaction dihydroxyacetone phosphate = methylglyoxal + phosphate. Its function is as follows. Catalyzes the formation of methylglyoxal from dihydroxyacetone phosphate. The protein is Methylglyoxal synthase of Saccharophagus degradans (strain 2-40 / ATCC 43961 / DSM 17024).